The chain runs to 310 residues: Glutamyl-Q tRNA(Asp) synthetase (310 aa).

Residues 24 to 28 and E60 each bind L-glutamate; that span reads RFAPS. Residues 27–37 carry the 'HIGH' region motif; sequence PSPSGPLHFGS. C116, C118, Y130, and C134 together coordinate Zn(2+). L-glutamate contacts are provided by Y187 and R205. The 'KMSKS' region motif lies at 243-247; the sequence is KLSKQ. K246 lines the ATP pocket.

Belongs to the class-I aminoacyl-tRNA synthetase family. GluQ subfamily. It depends on Zn(2+) as a cofactor.

Its function is as follows. Catalyzes the tRNA-independent activation of glutamate in presence of ATP and the subsequent transfer of glutamate onto a tRNA(Asp). Glutamate is transferred on the 2-amino-5-(4,5-dihydroxy-2-cyclopenten-1-yl) moiety of the queuosine in the wobble position of the QUC anticodon. The protein is Glutamyl-Q tRNA(Asp) synthetase of Photobacterium profundum (strain SS9).